The chain runs to 221 residues: Small histidine-alanine-rich protein (221 aa).

The first 21 residues, 1–21 (MVSFSKNKILSAAVFASVLLL), serve as a signal peptide directing secretion. Residues 52–67 (AHAGDAHHAHHVADAH) show a composition bias toward basic and acidic residues. 2 disordered regions span residues 52 to 141 (AHAG…AANA) and 180 to 221 (AHHD…HLHH). Repeat copies occupy residues 57–59 (AHH) and 60–62 (AHH). The interval 57–68 (AHHAHHVADAHH) is 4 X 3 AA approximate tandem repeats of A-H-H. One copy of the 1-3; approximate repeat lies at 63-65 (VAD). 13 repeat units span residues 66 to 68 (AHH), 69 to 74 (AHHAAN), 75 to 80 (AHHAAN), 81 to 86 (AHHAAN), 87 to 92 (AHHAAN), 93 to 98 (AHHAAN), 99 to 104 (AHHAAN), 105 to 110 (AHHAAN), 111 to 116 (AHHAAN), 117 to 122 (AHHAAN), 123 to 128 (AHHAAN), 129 to 134 (AHHAAN), and 135 to 140 (AHHAAN). The tract at residues 69–146 (AHHAANAHHA…HAANAHHAAD (78 aa)) is 13 X 6 AA approximate tandem repeats of A-H-H-A-A-N. A compositionally biased stretch (low complexity) spans 75–141 (AHHAANAHHA…AANAHHAANA (67 aa)). A 2-13; approximate repeat occupies 141 to 146 (AHHAAD). Tandem repeats lie at residues 176–180 (HHDDA), 181–185 (HHDGA), 186–190 (HHDDA), 191–195 (HHDGA), 196–200 (HHDGA), 201–205 (HHDGA), and 206–210 (HHDGA). The segment at 176–210 (HHDDAHHDGAHHDDAHHDGAHHDGAHHDGAHHDGA) is 7 X 5 AA tandem repeats of H-H-D-[DG]-A. Over residues 180 to 211 (AHHDGAHHDDAHHDGAHHDGAHHDGAHHDGAH) the composition is skewed to basic and acidic residues.

In Plasmodium falciparum (isolate FC27 / Papua New Guinea), this protein is Small histidine-alanine-rich protein.